Consider the following 487-residue polypeptide: UDP-N-acetylmuramate--L-alanine ligase (487 aa).

126 to 132 (GTHGKTT) contributes to the ATP binding site.

This sequence belongs to the MurCDEF family.

It localises to the cytoplasm. The catalysed reaction is UDP-N-acetyl-alpha-D-muramate + L-alanine + ATP = UDP-N-acetyl-alpha-D-muramoyl-L-alanine + ADP + phosphate + H(+). The protein operates within cell wall biogenesis; peptidoglycan biosynthesis. Functionally, cell wall formation. The protein is UDP-N-acetylmuramate--L-alanine ligase of Proteus mirabilis (strain HI4320).